The sequence spans 317 residues: Acetyl-coenzyme A carboxylase carboxyl transferase subunit alpha (317 aa).

The region spanning 39 to 293 is the CoA carboxyltransferase C-terminal domain; the sequence is RLESKAAAAL…GDALAEALTG (255 aa).

This sequence belongs to the AccA family. In terms of assembly, acetyl-CoA carboxylase is a heterohexamer composed of biotin carboxyl carrier protein (AccB), biotin carboxylase (AccC) and two subunits each of ACCase subunit alpha (AccA) and ACCase subunit beta (AccD).

It is found in the cytoplasm. The enzyme catalyses N(6)-carboxybiotinyl-L-lysyl-[protein] + acetyl-CoA = N(6)-biotinyl-L-lysyl-[protein] + malonyl-CoA. It functions in the pathway lipid metabolism; malonyl-CoA biosynthesis; malonyl-CoA from acetyl-CoA: step 1/1. Its function is as follows. Component of the acetyl coenzyme A carboxylase (ACC) complex. First, biotin carboxylase catalyzes the carboxylation of biotin on its carrier protein (BCCP) and then the CO(2) group is transferred by the carboxyltransferase to acetyl-CoA to form malonyl-CoA. This is Acetyl-coenzyme A carboxylase carboxyl transferase subunit alpha from Methylobacterium nodulans (strain LMG 21967 / CNCM I-2342 / ORS 2060).